The sequence spans 394 residues: 1-deoxy-D-xylulose 5-phosphate reductoisomerase (394 aa).

NADPH is bound by residues T14, G15, S16, I17, G40, and N128. K129 is a binding site for 1-deoxy-D-xylulose 5-phosphate. E130 is an NADPH binding site. D154 lines the Mn(2+) pocket. Positions 155, 156, 180, and 203 each coordinate 1-deoxy-D-xylulose 5-phosphate. E156 is a binding site for Mn(2+). Position 209 (G209) interacts with NADPH. 4 residues coordinate 1-deoxy-D-xylulose 5-phosphate: S216, N221, K222, and E225. Mn(2+) is bound at residue E225.

This sequence belongs to the DXR family. It depends on Mg(2+) as a cofactor. Mn(2+) is required as a cofactor.

It carries out the reaction 2-C-methyl-D-erythritol 4-phosphate + NADP(+) = 1-deoxy-D-xylulose 5-phosphate + NADPH + H(+). It functions in the pathway isoprenoid biosynthesis; isopentenyl diphosphate biosynthesis via DXP pathway; isopentenyl diphosphate from 1-deoxy-D-xylulose 5-phosphate: step 1/6. Functionally, catalyzes the NADPH-dependent rearrangement and reduction of 1-deoxy-D-xylulose-5-phosphate (DXP) to 2-C-methyl-D-erythritol 4-phosphate (MEP). In Xylella fastidiosa (strain M12), this protein is 1-deoxy-D-xylulose 5-phosphate reductoisomerase.